We begin with the raw amino-acid sequence, 688 residues long: MNFENLLIELGTEELPPKALRKLAESFLANFTEELTKADLAFKSAVWYAAPRRLAINVTELALAQADKIVEKRGPAVSSAFDAEGKPTKAAEGWARGNGITVDQAERLVTDKGEWLVYNAKVEGVETKSLIAAMAQRALDKLPIPKPMRWGSSKTQFIRPVHTATMLLGSELIEGELLGIKSARNVRGHRFMGTGFELDHADNYLTLLKEKGKVIADYESRKALIKADAEKAAAKIGGTADIEDDLLEEVTSLVEWPVVLTASFEEKFLNVPSEALVYTMKGDQKYFPVFDDAGKLLPNFIFVANIESKDPAQIIAGNEKVVRPRLADAEFFFNTDKKHTLESRLPSLETVLFQQQLGTLKDKVTRISALAAFIAEQTGANAVDAARAGLLSKTDLMTNMVMEFTDTQGTMGMHYARLDGETEAVALAMEEQYKPKFSGDTVPTAAVSCAVALADKLDTLVGIFGIGQAPKGAADPFALRRAAIGVLRIIVENKLPLDLVTLIAKAQELHGTNLSNANASDEVLEFLMARFRAWYQDKGIEVDVILAVLARRPTRPADFDSRINAVSHFRSLEASSALAAANKRVSNILAKVEGELPTTINSALLAEAAEQALAAKLAELQPQLAPLFANADYQQALTLLASLRESVDQFFEDVMVMADDEALKNNRLALLNNLREQFLHVADISLLQ.

Belongs to the class-II aminoacyl-tRNA synthetase family. Tetramer of two alpha and two beta subunits.

The protein localises to the cytoplasm. The enzyme catalyses tRNA(Gly) + glycine + ATP = glycyl-tRNA(Gly) + AMP + diphosphate. This is Glycine--tRNA ligase beta subunit from Shewanella sp. (strain ANA-3).